The sequence spans 163 residues: Endoribonuclease YbeY (163 aa).

3 residues coordinate Zn(2+): His-119, His-123, and His-129.

Belongs to the endoribonuclease YbeY family. The cofactor is Zn(2+).

Its subcellular location is the cytoplasm. In terms of biological role, single strand-specific metallo-endoribonuclease involved in late-stage 70S ribosome quality control and in maturation of the 3' terminus of the 16S rRNA. The protein is Endoribonuclease YbeY of Actinobacillus pleuropneumoniae serotype 5b (strain L20).